The chain runs to 390 residues: Flavohemoprotein (390 aa).

S2 carries the N-acetylserine modification. In terms of domain architecture, Globin spans 12–149; the sequence is PLTPTEINFL…LAQTLIDAEA (138 aa). A heme b-binding site is contributed by H96. Active-site charge relay system residues include Y106 and E148. The reductase stretch occupies residues 157–390; sequence WEEFKDFRVT…EFFGPTDPDC (234 aa). In terms of domain architecture, FAD-binding FR-type spans 158–263; the sequence is EEFKDFRVTK…HAPVGTMKYD (106 aa). FAD contacts are provided by residues Y196 and 214–217; that span reads REYS. 277–282 lines the NADP(+) pocket; that stretch reads GIGITP. 382–385 is an FAD binding site; sequence FFGP.

The protein belongs to the globin family. Two-domain flavohemoproteins subfamily. In the C-terminal section; belongs to the flavoprotein pyridine nucleotide cytochrome reductase family. The cofactor is FAD. Heme b is required as a cofactor.

It localises to the cytoplasm. The enzyme catalyses 2 nitric oxide + NADPH + 2 O2 = 2 nitrate + NADP(+) + H(+). It catalyses the reaction 2 nitric oxide + NADH + 2 O2 = 2 nitrate + NAD(+) + H(+). Functionally, is involved in NO detoxification in an aerobic process, termed nitric oxide dioxygenase (NOD) reaction that utilizes O(2) and NAD(P)H to convert NO to nitrate, which protects the fungus from various noxious nitrogen compounds. Therefore, plays a central role in the inducible response to nitrosative stress. Its function is as follows. In the presence of oxygen and NADH, it has NADH oxidase activity, which leads to the generation of superoxide and H(2)O(2). Under anaerobic conditions, it also exhibits nitric oxide reductase and FAD reductase activities. However, all these reactions are much lower than NOD activity. This Candida norvegensis (Yeast) protein is Flavohemoprotein.